Consider the following 102-residue polypeptide: Small ribosomal subunit protein uS10 (102 aa).

This sequence belongs to the universal ribosomal protein uS10 family. Part of the 30S ribosomal subunit.

Functionally, involved in the binding of tRNA to the ribosomes. The sequence is that of Small ribosomal subunit protein uS10 from Treponema pallidum (strain Nichols).